Consider the following 534-residue polypeptide: Potential RNA-dependent RNA polymerase (534 aa).

In terms of domain architecture, RdRp catalytic spans 255–373 (DVVVCTDFSK…TYPGISAEDV (119 aa)).

It is found in the virion. The enzyme catalyses RNA(n) + a ribonucleoside 5'-triphosphate = RNA(n+1) + diphosphate. RNA-directed RNA polymerase that is involved in both transcription and genome replication. This is Potential RNA-dependent RNA polymerase (Segment-2) from Human picobirnavirus (strain Human/Thailand/Hy005102/-) (PBV).